A 368-amino-acid polypeptide reads, in one-letter code: Glycine betaine monooxygenase reductase subunit (368 aa).

In terms of domain architecture, FAD-binding FR-type spans 16-119; the sequence is NGRHNVRCVK…HGPVGDFNVI (104 aa). The 85-residue stretch at 284-368 folds into the 2Fe-2S ferredoxin-type domain; it reads LQVEFSNSGK…TPKSHVAIEF (85 aa). Positions 318, 323, 326, and 356 each coordinate [2Fe-2S] cluster.

This sequence in the N-terminal section; belongs to the FAD-binding oxidoreductase type 6 family. Monomer. The system is composed of an oxygenase subunit (BmoA) and a reductase subunit (BmoB). Maximal specific activity is obtained when the ratio of BmoA to BmoB is 5:1. FAD is required as a cofactor. [2Fe-2S] cluster serves as cofactor.

It carries out the reaction glycine betaine + NADH + O2 + H(+) = N,N-dimethylglycine + formaldehyde + NAD(+) + H2O. Its function is as follows. Involved in degradation of glycine betaine. Part of a Rieske-type oxygenase system that catalyzes the conversion of glycine betaine (GB) to dimethylglycine (DMG). This subunit is the ferredoxin reductase component of the system. NADH is the preferred electron donor. In Chromohalobacter salexigens (strain ATCC BAA-138 / DSM 3043 / CIP 106854 / NCIMB 13768 / 1H11), this protein is Glycine betaine monooxygenase reductase subunit.